The following is a 200-amino-acid chain: MMLFGKISQQLCGVKKLPWSCDSRYFWGWLNAVFNKVDYDRIRDVGPDRAASEWLLRCGAMVRYHGQERWQKDYNHLPTGPLDKYKIQAIDATDSCIMSIGFDHMEGLEHVEKIRLCKCHYIEDDCLLRLSQLENLQKTILEMEIISCGNITDKGIIALLHLRNLKYLLLSDLPGVREKENLVQAFKTALPSLELKLQLK.

The N-terminal 25 residues, 1–25 (MMLFGKISQQLCGVKKLPWSCDSRY), are a transit peptide targeting the mitochondrion. Residues 1 to 61 (MMLFGKISQQ…SEWLLRCGAM (61 aa)) are N-terminal domain. Gly-59 provides a ligand contact to Mg(2+). LRR repeat units lie at residues 62 to 87 (VRYH…KYKI), 88 to 116 (QAID…KIRL), 117 to 141 (CKCH…KTIL), and 142 to 173 (EMEI…LSDL). A Mg(2+)-binding site is contributed by Thr-93.

It belongs to the ATP synthase subunit s family. In terms of assembly, homotetramer. Associates with ATP synthase.

It is found in the mitochondrion. Its subcellular location is the mitochondrion inner membrane. Functionally, involved in regulation of mitochondrial membrane ATP synthase. Necessary for H(+) conduction of ATP synthase. Facilitates energy-driven catalysis of ATP synthesis by blocking a proton leak through an alternative proton exit pathway. In Pongo abelii (Sumatran orangutan), this protein is ATP synthase subunit s, mitochondrial (DMAC2L).